A 130-amino-acid chain; its full sequence is D-ribose pyranase (130 aa).

The active-site Proton donor is histidine 20. Residues aspartate 28, histidine 97, and 119–121 (YAN) each bind substrate.

Belongs to the RbsD / FucU family. RbsD subfamily. As to quaternary structure, homodecamer.

Its subcellular location is the cytoplasm. It catalyses the reaction beta-D-ribopyranose = beta-D-ribofuranose. It participates in carbohydrate metabolism; D-ribose degradation; D-ribose 5-phosphate from beta-D-ribopyranose: step 1/2. Catalyzes the interconversion of beta-pyran and beta-furan forms of D-ribose. The polypeptide is D-ribose pyranase (Bacillus pumilus (strain SAFR-032)).